The primary structure comprises 208 residues: Ribosomal RNA large subunit methyltransferase E (208 aa).

S-adenosyl-L-methionine is bound by residues glycine 63, tryptophan 65, aspartate 83, aspartate 99, and aspartate 124. Catalysis depends on lysine 164, which acts as the Proton acceptor.

This sequence belongs to the class I-like SAM-binding methyltransferase superfamily. RNA methyltransferase RlmE family.

It is found in the cytoplasm. The enzyme catalyses uridine(2552) in 23S rRNA + S-adenosyl-L-methionine = 2'-O-methyluridine(2552) in 23S rRNA + S-adenosyl-L-homocysteine + H(+). In terms of biological role, specifically methylates the uridine in position 2552 of 23S rRNA at the 2'-O position of the ribose in the fully assembled 50S ribosomal subunit. The protein is Ribosomal RNA large subunit methyltransferase E of Blochmanniella pennsylvanica (strain BPEN).